Consider the following 344-residue polypeptide: uncharacterized protein (344 aa).

8 helical membrane-spanning segments follow: residues 25–45 (GAGWACGVTVVLPPPGTVGAV), 68–88 (FVDALLLAGGSAYGLAAADGV), 104–124 (GVVPIVPGAVIFDLPVGGWNC), 133–153 (SACAAAGVDVAVGTVGVGVGA), 161–181 (GVGTASATLQSGVTVGVLAVV), 224–244 (LGAFNTPFNTTIGVIACDAAL), 276–296 (VFALATGAVAVPPEAGVPAAL), and 302–322 (LVTAVGAAAADCLARAVLAGV).

The protein belongs to the peptidase S58 family.

It localises to the cell membrane. Its function is as follows. Aminopeptidase. This is an uncharacterized protein from Mycobacterium bovis (strain ATCC BAA-935 / AF2122/97).